Here is a 92-residue protein sequence, read N- to C-terminus: Small ribosomal subunit protein uS19c (92 aa).

The protein belongs to the universal ribosomal protein uS19 family.

Its subcellular location is the plastid. The protein localises to the chloroplast. In terms of biological role, protein S19 forms a complex with S13 that binds strongly to the 16S ribosomal RNA. In Anthoceros angustus (Hornwort), this protein is Small ribosomal subunit protein uS19c (rps19).